Reading from the N-terminus, the 373-residue chain is Alanine racemase (373 aa).

The Proton acceptor; specific for D-alanine role is filled by Lys35. Lys35 is subject to N6-(pyridoxal phosphate)lysine. Arg130 serves as a coordination point for substrate. The active-site Proton acceptor; specific for L-alanine is Tyr253. A substrate-binding site is contributed by Met305.

The protein belongs to the alanine racemase family. It depends on pyridoxal 5'-phosphate as a cofactor.

It carries out the reaction L-alanine = D-alanine. It functions in the pathway amino-acid biosynthesis; D-alanine biosynthesis; D-alanine from L-alanine: step 1/1. Functionally, catalyzes the interconversion of L-alanine and D-alanine. May also act on other amino acids. In Cupriavidus necator (strain ATCC 17699 / DSM 428 / KCTC 22496 / NCIMB 10442 / H16 / Stanier 337) (Ralstonia eutropha), this protein is Alanine racemase (alr).